We begin with the raw amino-acid sequence, 61 residues long: UPF0434 protein TM1040_0056 (61 aa).

It belongs to the UPF0434 family.

The sequence is that of UPF0434 protein TM1040_0056 from Ruegeria sp. (strain TM1040) (Silicibacter sp.).